Consider the following 715-residue polypeptide: Gelsolin, cytoplasmic (715 aa).

Residues 1-124 (MTTELEIQKA…YLIGGVASGF (124 aa)) form an actin-severing region. Residues 24–75 (FELVPVPKTNHGKFYTGDSYIILKTTALESGRGFEWNLHYWQGKESSQDERG) form a Gelsolin-like 1 repeat. Positions 72–75 (DERG) are actin-actin interfilament contact point. 136-145 (KVLTRVKGKR) serves as a coordination point for a 1,2-diacyl-sn-glycero-3-phospho-(1D-myo-inositol-4,5-bisphosphate). 3 Gelsolin-like repeats span residues 147 to 187 (VRAT…FEKN), 260 to 306 (LKIT…TERA), and 405 to 451 (LRKE…NERT). Residues 384-715 (AAESKMIDDG…FLGWDKTLWD (332 aa)) are actin-binding, Ca-sensitive. Gly421, Asp422, Glu449, Thr499, Asn539, Asp540, Glu562, Asp642, and Glu665 together coordinate Ca(2+). Gelsolin-like repeat units follow at residues 524–564 (CRAV…SEIQ) and 625–667 (FIAE…EEKM).

Belongs to the villin/gelsolin family. As to expression, predominantly in the body wall muscle, but expression is not restricted to muscle cells.

It is found in the cytoplasm. The protein localises to the cytoskeleton. Calcium-regulated, actin-modulating protein that binds to the plus (or barbed) ends of actin monomers or filaments, preventing monomer exchange (end-blocking or capping). It can promote the assembly of monomers into filaments (nucleation) as well as sever filaments already formed. The chain is Gelsolin, cytoplasmic from Halocynthia roretzi (Sea squirt).